The primary structure comprises 264 residues: Transformer-2 sex-determining protein (264 aa).

Residues 1 to 96 form a disordered region; it reads MDREPLSSGR…HKSREHPQAS (96 aa). Residues 13-22 show a composition bias toward basic residues; sequence CSARYKHKRS. Over residues 23-33 the composition is skewed to low complexity; that stretch reads ASSSSAGTTSS. A Phosphoserine modification is found at Ser40. Over residues 47 to 61 the composition is skewed to basic residues; that stretch reads SRRHQRSSSRRRSRS. Positions 71–85 are enriched in basic and acidic residues; that stretch reads EPRHRSGRSSRDRER. The RRM domain maps to 97–175; sequence RCIGVFGLNT…RRIRVDFSIT (79 aa). The tract at residues 176 to 196 is linker; sequence QRAHTPTPGVYLGRQPRGKAP. The interval 179-264 is disordered; that stretch reads HTPTPGVYLG…PQLRRTSSRY (86 aa). Thr180 is modified (phosphothreonine). Residues 191–206 show a composition bias toward basic residues; the sequence is PRGKAPRSFSPRRGRR. Over residues 207-234 the composition is skewed to basic and acidic residues; that stretch reads VYHDRSASPYDNYRDRYDYRNDRYDRNL. Residues Ser212 and Ser214 each carry the phosphoserine modification. A compositionally biased stretch (basic residues) spans 235–250; that stretch reads RRSPSRNRYTRNRSYS. Residue Ser254 is modified to Phosphoserine.

It belongs to the splicing factor SR family. In terms of processing, extensively phosphorylated on serine residues in the RS domain. In terms of tissue distribution, isoform Tmaj and isoform Tmin are expressed in males and females. Isoform msTmaj and isoform msTmin are present only in male germ cells.

Required for female sex determination in somatic cells and for spermatogenesis in male germ cells. Positive regulator of female-specific splicing and/or polyadenylation of doublesex (dsx) pre-mRNA. Splicing requires an enhancer complex, dsxRE (dsx repeat element: which contains six copies of a 13-nucleotide repeat and a purine-rich enhancer (PRE)). DsxRE is formed through cooperative interactions between tra, tra2 and the sr proteins, and these interactions require both the repeat sequences and PRE. PRE is required for specific binding of tra2 to the dsxRE. Protein-RNA and protein-protein interactions are involved in tra-2 dependent activation and repression of alternative splicing. Together with tra-2, plays a role in switching fru splicing from the male-specific pattern to the female-specific pattern through activation of the female-specific fru 5'-splice site. This Drosophila melanogaster (Fruit fly) protein is Transformer-2 sex-determining protein (tra2).